The sequence spans 672 residues: NADPH-Fe(3+) oxidoreductase subunit beta (672 aa).

Residues Cys-203, Cys-207, Cys-211, and Cys-215 each contribute to the [4Fe-4S] cluster site. 254-283 (KKVAIVGAGPAGLACAYYLALEGYPCTIYE) serves as a coordination point for FAD. Residue 388–421 (GKKVVVVGGGNTAIDCVRVALREGAEESTLLYRR) coordinates NADP(+). 552–562 (TDLEGVFAGGD) contacts FAD.

As to quaternary structure, heterotetramer with 2 alpha subunits. Requires [4Fe-4S] cluster as cofactor. FAD is required as a cofactor.

It is found in the cell membrane. Functionally, probably involved in acetate metabolism and not in the reduction of Fe(3+) chelates. May serve as a major route for NADP regeneration. This chain is NADPH-Fe(3+) oxidoreductase subunit beta (sfrB), found in Geobacter sulfurreducens (strain DL-1 / KN400).